The chain runs to 248 residues: MNGLGMQKFEHPLNERTRIYLRIESLLRKLGHSADLTQPYEYQVFFSSLFHMLDILEQVQVKADLGKDLEKLRLQYRAWMNIEGVDQSALLSVLEQISQVHQNLMQTTRPGHSLKEDRFLSALKQRFFIPGGDCCFDLPALHHWLHLPLDVRCRNTHNWMSQLLSLSDALSLWLRLTRETARYTPQIARNGFMQSEMENSNLLRLEIPIDQGVYPMISGHKSRFALRFMSFETNKNCEKDIEFTLAVC.

The protein belongs to the ZapD family. As to quaternary structure, interacts with FtsZ.

It localises to the cytoplasm. Functionally, cell division factor that enhances FtsZ-ring assembly. Directly interacts with FtsZ and promotes bundling of FtsZ protofilaments, with a reduction in FtsZ GTPase activity. This Aliivibrio salmonicida (strain LFI1238) (Vibrio salmonicida (strain LFI1238)) protein is Cell division protein ZapD.